The sequence spans 1201 residues: MSDEEDIDESFEIEEDGISITDARGNSLKAQQIAGKERNLDPEADDLEVVVNFYEAGDGTFQLQLPKLTAVKPVDKVNDVLDFINFDKKVCDGIHSSIKLVSQRDQTGPAPFPKHKLTCAHCDWSFDNVMKLVRHRGVHKNVGVYMCQVCLTLFGHTYNLFMHWRTSCSQTSTTATDIEIQKAETPYLHRNVLNVLGSLNRASQYYCTGGYVFLPSDWCITNKEIVMEKDHMSSCHLCHLPVPNKFLEAHGNVHRGRFRIDGRIYGDYFCHICGTVFIEQDNLFKHWRLHCEEVIAYTPVDQYLSNTELATLAWLVLQTTISQADIECLRVSSSLITEKLAKEHAERHGIANSMHKYYHFPQEIWPLKTFVNLDLVNDAIPISGENSFKIKDPKRPVHIMNLLATACPGFYATGKTFNMICSTKKSESDTKKVYRVILRYTTEGSVIQSYDFTARSFPKLRVDSETPEGVFSHPLADFNVESNEAIVCHKCDSKKLTITFSTEVRLKYHLLRHSESRKDGYHCAICKIIVYNRSHEEHWINDCIPLQKLYRDQKDRECFDAEFAAKCASIIKKLRIRTLIRWKERANEDWVETKQTPDRIGEDFAIKFQVGTTALKTLMAGLEEHYKNAQARHEAYKYSEENFLPPLSTPVVVCFHCGTRCHYTLLHDHLDYCHYWPRNKRLVNEEFHKWKKNGCRNTWRVMKSVAEAMQIEVPFISEEQYSKILDYHTYFCNDTRYKVQDSINNWNDCSTIRDVDLSEKLSVAEIVQKGEDSVMAPEPDIIKNVYFPSARIITDNMLLRMTEINLNDVVQRDPITKEELTGKFKEVQDEQDAILFGDYRAVLRSKGIMVNSISDFVAPPDELAKAKASQESAGQESVDHRNRREREFIQQYMGKDLALEAAARENGRLVEVDEEAEDYELTPKELNARRLVERNRHREMCKTRCEHGEYDYEKFKARQVPINPAKMKERKYLTRVVHESGPDDDVCPDEPENNIIAFSPKYENSLSDFRISAIGFREKYLADDKKKRNGIPIRKMTEAQKGVALDYDTLMARHGGRPDVIMNPAGTVFVGGFVFDRKPTCQDNMQTVYVLRNGYAHRYRIYHCEDTNGIYKFVWPQEQSFDPDSLAKSARVRMVKQVKSPEHMIHHIEEIDESIGHNYRLNRKRRNSETREHELIELDTDDLNEPSTSDGRYSFGHHGYR.

7 C2H2-type zinc fingers span residues 117–139 (LTCA…RGVH), 145–168 (YMCQ…RTSC), 233–254 (SSCH…GNVH), 268–290 (YFCH…WRLH), 486–513 (IVCH…LLRH), 521–543 (YHCA…INDC), and 652–674 (VVCF…DYCH). Residues 1164–1201 (KRRNSETREHELIELDTDDLNEPSTSDGRYSFGHHGYR) form a disordered region. Over residues 1167–1176 (NSETREHELI) the composition is skewed to basic and acidic residues.

Component of the SDC complex, which consists of sdc-1, sdc-2 and sdc-3. Within the complex, interacts with sdc-2 and sdc-3.

The protein localises to the nucleus. Its subcellular location is the chromosome. Embryonic transcription factor regulating downstream genes involved specifically in the sex determination and dosage compensation pathways, or regulating other genes involved in the coordinate control of both processes. Component of the SDC complex that functions in sex determination and in X chromosome dosage compensation specifically in hermaphrodite (XX) animals. Involved in the recruitment of the condensin I-like dosage compensation complex to the male sex-determining autosomal gene her-1, thereby contributing to its repression and initiating hermaphrodite sexual development. Similarly, might contribute to X-linked gene repression through recruitment of the dosage compensation complex to the X chromosomes in hermaphrodites. Seems to be involved in the depletion of histone H4 lysine 16 acetylation (H4K16ac) on dosage compensated X chromosomes. Plays a role in developmental rate and body fat regulation downstream of the TOR complex 2 pathway. The polypeptide is Zinc finger protein sdc-1 (sdc-1) (Caenorhabditis elegans).